The primary structure comprises 128 residues: Protein Wnt-8 (128 aa).

The O-palmitoleoyl serine moiety is linked to residue serine 1. Intrachain disulfides connect cysteine 69/cysteine 109 and cysteine 85/cysteine 102. Asparagine 72 carries N-linked (GlcNAc...) asparagine glycosylation.

It belongs to the Wnt family. Palmitoleoylation is required for efficient binding to frizzled receptors. Depalmitoleoylation leads to Wnt signaling pathway inhibition. Post-translationally, proteolytic processing by tiki1 and tiki2 promotes oxidation and formation of large disulfide-bond oligomers, leading to inactivation of wnt8.

Its subcellular location is the secreted. The protein localises to the extracellular space. It localises to the extracellular matrix. Ligand for members of the frizzled family of seven transmembrane receptors. Probable developmental protein. May be a signaling molecule which affects the development of discrete regions of tissues. Is likely to signal over only few cell diameters. This Evasterias troschelii (Mottled sea star) protein is Protein Wnt-8 (WNT-8).